A 359-amino-acid polypeptide reads, in one-letter code: S-adenosylmethionine:tRNA ribosyltransferase-isomerase (359 aa).

The protein belongs to the QueA family. As to quaternary structure, monomer.

It is found in the cytoplasm. The catalysed reaction is 7-aminomethyl-7-carbaguanosine(34) in tRNA + S-adenosyl-L-methionine = epoxyqueuosine(34) in tRNA + adenine + L-methionine + 2 H(+). The protein operates within tRNA modification; tRNA-queuosine biosynthesis. Transfers and isomerizes the ribose moiety from AdoMet to the 7-aminomethyl group of 7-deazaguanine (preQ1-tRNA) to give epoxyqueuosine (oQ-tRNA). This is S-adenosylmethionine:tRNA ribosyltransferase-isomerase from Synechococcus elongatus (strain ATCC 33912 / PCC 7942 / FACHB-805) (Anacystis nidulans R2).